The sequence spans 1046 residues: Phospholipase D zeta 2 (1046 aa).

Residues 45 to 205 form the PX domain; that stretch reads PKAAIVSVSR…KEVCKFLEVS (161 aa). Positions 215–343 constitute a PH domain; that stretch reads SKMKEGYVTV…WVKAVDEAGC (129 aa). Residues 472 to 499 enclose the PLD phosphodiesterase 1 domain; that stretch reads YLWSHHEKIVIVDYQVCFIGGLDLCFGR. Residues His477, Lys479, and Asp484 contribute to the active site. Basic and acidic residues predominate over residues 653–667; it reads GRGDLKLDSGARQDP. Residues 653–677 are disordered; it reads GRGDLKLDSGARQDPGETSEESDLD. The 28-residue stretch at 847-874 folds into the PLD phosphodiesterase 2 domain; the sequence is SQIYVHSKLMIVDDRIAVIGSSNINDRS. Catalysis depends on residues His852, Lys854, and Asp859.

Belongs to the phospholipase D family. PXPH-PLD subfamily. Does not require Ca(2+) or any other cation for activity. is required as a cofactor. In terms of tissue distribution, expressed in seedlings, roots, leaves, stems and flowers. Highest expression in roots. Detected only in the meristematic regions up to 4 days after germination and then at later stages in all tissues.

It catalyses the reaction a 1,2-diacyl-sn-glycero-3-phosphocholine + H2O = a 1,2-diacyl-sn-glycero-3-phosphate + choline + H(+). In terms of biological role, hydrolyzes glycerol-phospholipids at the terminal phosphodiesteric bond to generate phosphatidic acids (PA). Phosphatidylcholine-selective. Regulates vesicle trafficking and auxin responses. Required for the normal cycling of PIN-2 containing vesicles. Contributes to the supply of inorganic phosphorus for cell metabolism and diacylglycerol moieties for galactolipid synthesis in phosphorus-starved roots. Involved in root elongation during phosphate limitation. This chain is Phospholipase D zeta 2, found in Arabidopsis thaliana (Mouse-ear cress).